Here is an 819-residue protein sequence, read N- to C-terminus: MEAEEADVDVEGDVAAAAQPGNDESTASVFQDHYLDSTWRRENGCLPWTLDSTISDENRAIIEKMLLEEEYYLSNKSLPGKFWVNQKEDNKKYTNSLQKSSKAMVDSPAKPASHSVKWTVEEKELFEQGLAKFGRRWTKIATLLKSRTVLQVKSYARQYFKNKVKWDVEKETPTQKSSSDLQVKNKDDRTKAWAAACLRGSADPCLNAVKIEKLSDDEDVDITDELDELTSQTSQNSGSHLTLDVPNSKMYTTNQGELCQEGPLAKSSGESLQNVKQGEGEACSSSEIASWAEKQKSTDKNSAELNEKYNKVVEEHTLHRGEVREEAKHSPSPEPCERQDSSGNEMLLPPCQIEEENHEGEELKPPEQEVEIDRNVIQEEEKQAIPEFFEGRQTKTPERYLKIRNYILDQWEICKPKYLNKTSVRPGLKNCGDVNCIGRIHTYLELIGAINFGCEQAVYNRPQPLDKVRAADRKDAEAAYQLAWRLQSMRTRRRRVRDPWGNWCDAKDLEGQTFEHLSVEEMARRKEEEKCKPIKFSKASKLPKSSLDPFQLIPCNFFSEEKQEPFQVKVAAEALLIMNLHAHVSMAEVIGLLGGRYSEADKVLEVCAAEPCNSLSTGLQCEMDPVSQTQASETLALRGYSVIGWYHSHPAFDPNPSLRDIDTQAKYQSYFSRGGAKFIGMIVSPYNRSNPLPYSQITCLVISEEVSPDGTYRLPYKFEVQQMLEEPQWELVFEKTRWIIEKYRLSNSSVPMDRIFRRDSDLTCLQKLLECLRKTLSKVANCFIAEEFLTQIENLFLSNYKSKEENGLAEEDSTKELFM.

Residues 1–12 (MEAEEADVDVEG) are compositionally biased toward acidic residues. The disordered stretch occupies residues 1–29 (MEAEEADVDVEGDVAAAAQPGNDESTASV). Position 107 is a phosphoserine (Ser-107). In terms of domain architecture, SANT spans 113–164 (SHSVKWTVEEKELFEQGLAKFGRRWTKIATLLKSRTVLQVKSYARQYFKNKV). Lys-184 is covalently cross-linked (Glycyl lysine isopeptide (Lys-Gly) (interchain with G-Cter in SUMO2)). Phosphoserine is present on Ser-215. Disordered stretches follow at residues 228 to 247 (ELTSQTSQNSGSHLTLDVPN), 260 to 279 (QEGPLAKSSGESLQNVKQGE), and 318 to 347 (LHRGEVREEAKHSPSPEPCERQDSSGNEML). The span at 230-240 (TSQTSQNSGSH) shows a compositional bias: polar residues. At Thr-233 the chain carries Phosphothreonine. Basic and acidic residues predominate over residues 318 to 340 (LHRGEVREEAKHSPSPEPCERQD). Ser-332 is modified (phosphoserine). The 99-residue stretch at 363–461 (LKPPEQEVEI…FGCEQAVYNR (99 aa)) folds into the SWIRM domain. Residues 568-700 (VKVAAEALLI…PLPYSQITCL (133 aa)) form the MPN domain. 3 residues coordinate Zn(2+): His-647, His-649, and Asp-660. A JAMM motif motif is present at residues 647–660 (HSHPAFDPNPSLRD). The short motif at 765-769 (LQKLL) is the LXXLL motif element.

It belongs to the peptidase M67A family. MYSM1 subfamily. Component of a large chromatin remodeling complex, at least composed of MYSM1, PCAF, RBM10 and KIF11/TRIP5. Binds histones.

The protein localises to the nucleus. It is found in the cytoplasm. In terms of biological role, metalloprotease with deubiquitinase activity that plays important regulator roles in hematopoietic stem cell function, blood cell production and immune response. Participates in the normal programming of B-cell responses to antigen after the maturation process. Within the cytoplasm, plays critical roles in the repression of innate immunity and autoimmunity. Removes 'Lys-63'-linked polyubiquitins from TRAF3 and TRAF6 complexes. Attenuates NOD2-mediated inflammation and tissue injury by promoting 'Lys-63'-linked deubiquitination of RIPK2 component. Suppresses the CGAS-STING1 signaling pathway by cleaving STING1 'Lys-63'-linked ubiquitin chains. In the nucleus, acts as a hematopoietic transcription regulator derepressing a range of genes essential for normal stem cell differentiation including EBF1 and PAX5 in B-cells, ID2 in NK-cell progenitor or FLT3 in dendritic cell precursors. Deubiquitinates monoubiquitinated histone H2A, a specific tag for epigenetic transcriptional repression, leading to dissociation of histone H1 from the nucleosome. The polypeptide is Deubiquitinase MYSM1 (Mysm1) (Mus musculus (Mouse)).